We begin with the raw amino-acid sequence, 1849 residues long: SH3 and multiple ankyrin repeat domains protein 2 (1849 aa).

A disordered region spans residues 1-33; sequence MPRSPTSSEDEMAQSFSDYSVGSESDSSKEETI. The span at 15–25 shows a compositional bias: low complexity; it reads SFSDYSVGSES. 6 ANK repeats span residues 196-226, 230-259, 263-293, 297-326, 330-359, and 363-393; these read TGET…HLDF, DGMT…SPDY, YGLT…TVCC, NGWH…DMSA, SGNT…NKEL, and NSQT…DIVP. Residues 451 to 493 are disordered; sequence QQMPSKPEGAAKTIGSYVPGPRSRSPSLNRLGGAGEDGKRPQP. The 60-residue stretch at 526 to 585 folds into the SH3 domain; sequence VPGRLFVAVKPYQPQVDGEIPLHRGDRVKVLSIGEGGFWEGSARGHIGWFPAECVEEVQC. The PDZ domain occupies 626–720; sequence TVVLQKKDNE…HLVLKVVTVT (95 aa). Residues 764–774 show a composition bias toward basic and acidic residues; sequence SVRKKKDKPEE. The interval 764-808 is disordered; sequence SVRKKKDKPEEIVPASKPSRAAENMAVEPRVATIKQRPSSRCFPA. The residue at position 831 (Ser831) is a Phosphoserine. At Thr860 the chain carries Phosphothreonine. The segment at 878–910 is disordered; it reads LSMPDTSEDIPPPPQSVPPSPPPPSPTTYNCPK. A compositionally biased stretch (pro residues) spans 887–903; sequence IPPPPQSVPPSPPPPSP. Ser960 bears the Phosphoserine mark. 4 disordered regions span residues 1013 to 1293, 1328 to 1371, 1432 to 1526, and 1574 to 1594; these read LVKQ…RKGD, LQEE…TTVP, PALS…GGEN, and SFVI…PGMA. Residues 1040-1052 are compositionally biased toward low complexity; that stretch reads STSSSGKSSQGSS. The span at 1086–1097 shows a compositional bias: basic and acidic residues; it reads VRDREKRLEARR. Ser1099 carries the phosphoserine modification. Residues 1128-1138 show a composition bias toward acidic residues; it reads EEGDFADEDSA. Composition is skewed to low complexity over residues 1159-1170, 1181-1199, and 1208-1221; these read GGAEASAPGEAG, GPES…AGPG, and RLLD…LALS. Residues 1274–1293 show a composition bias toward basic and acidic residues; the sequence is RRQETENKYETDLGRDRKGD. Thr1278 carries the post-translational modification Phosphothreonine. The SH3-binding signature appears at 1327–1333; that stretch reads ALQEEDE. Low complexity predominate over residues 1343-1357; the sequence is SSPSEVPEGVSETEG. Over residues 1445 to 1460 the composition is skewed to polar residues; the sequence is TPQSPSLNSSQPTNSA. The span at 1494 to 1505 shows a compositional bias: basic and acidic residues; it reads VDSRSSSDHHLE. Residues 1506–1522 show a composition bias toward low complexity; it reads TTSTISTVSSISTLSSE. The span at 1577 to 1588 shows a compositional bias: pro residues; it reads IPPPAPPPPPGS. The O-linked (GlcNAc) threonine glycan is linked to Thr1667. Positions 1678 to 1692 are enriched in polar residues; that stretch reads FTVRPGTSQPITLQS. The tract at residues 1678-1776 is disordered; that stretch reads FTVRPGTSQP…SILQQPISNK (99 aa). A phosphoserine mark is found at Ser1709 and Ser1713. Composition is skewed to low complexity over residues 1721–1738 and 1760–1774; these read TLPA…PALS and RSRS…QPIS. The SAM domain maps to 1786–1849; sequence WTKPDVADWL…ERALKQLLDR (64 aa).

It belongs to the SHANK family. In terms of assembly, is part of a complex with DLG4/PSD-95 and DLGAP1/GKAP. Interacts with CTTN/cortactin SH3 domain, DLGAP1/GKAP and alpha-latrotoxin receptor 1. Interacts with DNM2, DBNL, GRID2, BAIAP2, SLC9A3, PLCB3 and CFTR. Interacts (via proline-rich region) with PDE4D. Interacts with ABI1 (via SH3 domain). As to expression, isoform 3 is present in epithelial colonic cells (at protein level).

Its subcellular location is the apical cell membrane. It is found in the cytoplasm. The protein localises to the synapse. The protein resides in the postsynaptic density. It localises to the cell projection. Its subcellular location is the growth cone. It is found in the dendritic spine. Its function is as follows. Seems to be an adapter protein in the postsynaptic density (PSD) of excitatory synapses that interconnects receptors of the postsynaptic membrane including NMDA-type and metabotropic glutamate receptors, and the actin-based cytoskeleton. May play a role in the structural and functional organization of the dendritic spine and synaptic junction. The polypeptide is SH3 and multiple ankyrin repeat domains protein 2 (SHANK2) (Homo sapiens (Human)).